Reading from the N-terminus, the 218-residue chain is ATP-dependent dethiobiotin synthetase BioD (218 aa).

10 to 15 (NAGKTT) is an ATP binding site. Position 14 (Thr-14) interacts with Mg(2+). Residue Lys-35 is part of the active site. Thr-39 contacts substrate. Glu-116 lines the Mg(2+) pocket. Residues 116-119 (EGAG) and 176-177 (LR) each bind ATP.

This sequence belongs to the dethiobiotin synthetase family. Homodimer. Requires Mg(2+) as cofactor.

Its subcellular location is the cytoplasm. It catalyses the reaction (7R,8S)-7,8-diammoniononanoate + CO2 + ATP = (4R,5S)-dethiobiotin + ADP + phosphate + 3 H(+). It functions in the pathway cofactor biosynthesis; biotin biosynthesis; biotin from 7,8-diaminononanoate: step 1/2. Functionally, catalyzes a mechanistically unusual reaction, the ATP-dependent insertion of CO2 between the N7 and N8 nitrogen atoms of 7,8-diaminopelargonic acid (DAPA, also called 7,8-diammoniononanoate) to form a ureido ring. The chain is ATP-dependent dethiobiotin synthetase BioD from Helicobacter pylori (strain J99 / ATCC 700824) (Campylobacter pylori J99).